A 1022-amino-acid polypeptide reads, in one-letter code: Polyamine-modulated factor 1-binding protein 1 (1022 aa).

5 coiled-coil regions span residues 89 to 121 (NKQY…LQAS), 169 to 281 (EKLH…ACSN), 312 to 377 (SEDC…LREE), 411 to 732 (LKKD…SAIQ), and 758 to 968 (QDDL…KAGN). Composition is skewed to basic and acidic residues over residues 545–556 (QKESSKIEEERK) and 571–582 (EGQRRLSNAEKE). Positions 545 to 582 (QKESSKIEEERKHNRQRLQELSSELSEGQRRLSNAEKE) are disordered.

As to expression, expressed in the testis.

It is found in the cell projection. It localises to the cilium. Its subcellular location is the flagellum. Its function is as follows. Required for normal spermatogenesis. It functions as a scaffold protein that attaches the sperm head-tail connecting piece to the nuclear envelope, thus maintaining sperm head and tail integrity. May also be involved in the general organization of cellular cytoskeleton. The sequence is that of Polyamine-modulated factor 1-binding protein 1 (Pmfbp1) from Mus musculus (Mouse).